The chain runs to 478 residues: Divinyl ether synthase CYP74D2 (478 aa).

A heme-binding site is contributed by Cys431.

The protein belongs to the cytochrome P450 family. 9-divinyl ether synthase subfamily. As to expression, expressed in roots.

It catalyses the reaction (9S)-hydroperoxy-(10E,12Z)-octadecadienoate = colneleate + H2O. The enzyme catalyses (9S)-hydroperoxy-(10E,12Z,15Z)-octadecatrienoate = colnelenate + H2O. Functionally, involved in the biosynthesis of the anti-fungal and antibacterial toxins colneleate and colnelenate. Can use (9S)-hydroperoxy-(10E,12Z)-octadecadienoate (9-HPOD) and (9S)-hydroperoxy-(10E,12Z,15Z)-octadecatrienoate (9-HPOT) as substrates but has no activity with the corresponding 13-hydroperoxides (13-HPOD and 13-HPOT). The chain is Divinyl ether synthase CYP74D2 from Solanum tuberosum (Potato).